The primary structure comprises 620 residues: Somatic embryogenesis receptor kinase 4 (620 aa).

A signal peptide spans 1–33 (MTSSKMEQRSLLCFLYLLLLFNFTLRVAGNAEG). Residues 34 to 234 (DALTQLKNSL…GGQMTAAIAG (201 aa)) are Extracellular-facing. LRR repeat units follow at residues 100–122 (NLQY…LGDL), 124–146 (ELVS…LGKL), 148–170 (KLRF…LTSV), 171–193 (QLQV…GSFS), and 194–215 (LFTP…PPTS). N-linked (GlcNAc...) asparagine glycosylation occurs at N110. Residues N156, N189, and N202 are each glycosylated (N-linked (GlcNAc...) asparagine). A disordered region spans residues 205 to 227 (LTDLPEPPPTSTSPTPPPPSGGQ). Pro residues predominate over residues 209 to 224 (PEPPPTSTSPTPPPPS). Residues 235-255 (GVAAGAALLFAVPAIAFAWWL) form a helical membrane-spanning segment. Topologically, residues 256–620 (RRKPQDHFFD…IENDYPSGPR (365 aa)) are cytoplasmic. A Phosphothreonine modification is found at T291. One can recognise a Protein kinase domain in the interval 294–591 (FSNKNVLGRG…KEEMPIHDFN (298 aa)). S295 carries the phosphoserine modification. Residues 300-308 (LGRGGFGKV) and K322 contribute to the ATP site. S375 and S378 each carry phosphoserine. D421 acts as the Proton acceptor in catalysis. Phosphothreonine occurs at positions 454, 455, and 460. At Y468 the chain carries Phosphotyrosine. Residue S470 is modified to Phosphoserine. T471 carries the post-translational modification Phosphothreonine. S475 bears the Phosphoserine mark. Residue T551 is modified to Phosphothreonine.

This sequence belongs to the protein kinase superfamily. Ser/Thr protein kinase family. In terms of assembly, interacts with the EF-Tu receptor EFR and FLS2 in a specific ligand-induced manner. Interacts with TMK4/BARK1. Interacts with ERECTA in a EPF2-induced manner. Interacts with ERL1 in a EPF1-induced manner. Interacts with TMM. Forms a complex with MIK2 in response to SCOOP12 perception. In terms of processing, autophosphorylated on Thr and Tyr residues.

The protein resides in the cell membrane. It catalyses the reaction L-seryl-[protein] + ATP = O-phospho-L-seryl-[protein] + ADP + H(+). It carries out the reaction L-threonyl-[protein] + ATP = O-phospho-L-threonyl-[protein] + ADP + H(+). The catalysed reaction is L-tyrosyl-[protein] + ATP = O-phospho-L-tyrosyl-[protein] + ADP + H(+). Its function is as follows. Dual specificity kinase acting on both serine/threonine- and tyrosine-containing substrates. Positively regulates the BR-dependent plant growth pathway and negatively regulates the BR-independent cell-death pathway. Required during SCOOP small peptides (e.g. SCOOP10 and SCOOP12) perception and signaling; associates with MIK2 as a coreceptor upon MIK2 perception of SCOOP peptides, and relays the signaling through the activation of receptor-like cytosolic kinases (RLCKs) BIK1 and PBL1. This Arabidopsis thaliana (Mouse-ear cress) protein is Somatic embryogenesis receptor kinase 4.